Here is a 141-residue protein sequence, read N- to C-terminus: uncharacterized protein (141 aa).

This is an uncharacterized protein from Listeria innocua serovar 6a (strain ATCC BAA-680 / CLIP 11262).